A 121-amino-acid polypeptide reads, in one-letter code: UPF0102 protein BT_2236 (121 aa).

It belongs to the UPF0102 family.

In Bacteroides thetaiotaomicron (strain ATCC 29148 / DSM 2079 / JCM 5827 / CCUG 10774 / NCTC 10582 / VPI-5482 / E50), this protein is UPF0102 protein BT_2236.